Here is a 213-residue protein sequence, read N- to C-terminus: HTH-type transcriptional regulator SrpR (213 aa).

Residues 10–70 (EETRQRIIDA…AVLASRQHPL (61 aa)) form the HTH tetR-type domain. A DNA-binding region (H-T-H motif) is located at residues 33 to 52 (TLDQIARKAGVTRGAVYWHF).

Functionally, in conjunction with SrpS represses the srpABC operon. In Pseudomonas putida (Arthrobacter siderocapsulatus), this protein is HTH-type transcriptional regulator SrpR (srpR).